A 545-amino-acid chain; its full sequence is Glucose-6-phosphate isomerase (545 aa).

Glutamate 351 (proton donor) is an active-site residue. Residues histidine 382 and lysine 510 contribute to the active site.

This sequence belongs to the GPI family.

The protein localises to the cytoplasm. The catalysed reaction is alpha-D-glucose 6-phosphate = beta-D-fructose 6-phosphate. It functions in the pathway carbohydrate biosynthesis; gluconeogenesis. Its pathway is carbohydrate degradation; glycolysis; D-glyceraldehyde 3-phosphate and glycerone phosphate from D-glucose: step 2/4. Catalyzes the reversible isomerization of glucose-6-phosphate to fructose-6-phosphate. This chain is Glucose-6-phosphate isomerase, found in Shewanella amazonensis (strain ATCC BAA-1098 / SB2B).